The sequence spans 163 residues: Phosphopantetheine adenylyltransferase (163 aa).

Serine 9 lines the substrate pocket. ATP is bound by residues 9 to 10 (SF) and histidine 17. Lysine 41, isoleucine 75, and arginine 89 together coordinate substrate. ATP-binding positions include 90–92 (GIR), glutamate 100, and 125–131 (HLYVRSD).

Belongs to the bacterial CoaD family. Homohexamer. It depends on Mg(2+) as a cofactor.

It is found in the cytoplasm. The catalysed reaction is (R)-4'-phosphopantetheine + ATP + H(+) = 3'-dephospho-CoA + diphosphate. The protein operates within cofactor biosynthesis; coenzyme A biosynthesis; CoA from (R)-pantothenate: step 4/5. Its function is as follows. Reversibly transfers an adenylyl group from ATP to 4'-phosphopantetheine, yielding dephospho-CoA (dPCoA) and pyrophosphate. This chain is Phosphopantetheine adenylyltransferase, found in Borreliella burgdorferi (strain ZS7) (Borrelia burgdorferi).